Here is a 392-residue protein sequence, read N- to C-terminus: Formate-dependent phosphoribosylglycinamide formyltransferase (392 aa).

N(1)-(5-phospho-beta-D-ribosyl)glycinamide-binding positions include 22 to 23 and Glu-82; that span reads EL. ATP is bound by residues Arg-114, Lys-155, 160–165, 195–198, and Glu-203; these read SSGKGQ and EGVV. Positions 119-308 constitute an ATP-grasp domain; sequence RLAAEELGLP…EFALHVRAFL (190 aa). Positions 267 and 279 each coordinate Mg(2+). N(1)-(5-phospho-beta-D-ribosyl)glycinamide contacts are provided by residues Asp-286, Lys-355, and 362-363; that span reads RR.

The protein belongs to the PurK/PurT family. As to quaternary structure, homodimer.

The enzyme catalyses N(1)-(5-phospho-beta-D-ribosyl)glycinamide + formate + ATP = N(2)-formyl-N(1)-(5-phospho-beta-D-ribosyl)glycinamide + ADP + phosphate + H(+). Its pathway is purine metabolism; IMP biosynthesis via de novo pathway; N(2)-formyl-N(1)-(5-phospho-D-ribosyl)glycinamide from N(1)-(5-phospho-D-ribosyl)glycinamide (formate route): step 1/1. Its function is as follows. Involved in the de novo purine biosynthesis. Catalyzes the transfer of formate to 5-phospho-ribosyl-glycinamide (GAR), producing 5-phospho-ribosyl-N-formylglycinamide (FGAR). Formate is provided by PurU via hydrolysis of 10-formyl-tetrahydrofolate. This is Formate-dependent phosphoribosylglycinamide formyltransferase from Salmonella arizonae (strain ATCC BAA-731 / CDC346-86 / RSK2980).